A 257-amino-acid chain; its full sequence is Protein MoaE (257 aa).

6-29 (VITGGGTGIGAACARLMHPAGERV) serves as a coordination point for NAD(+). The disordered stretch occupies residues 75 to 96 (LMSSSAAPAGWATAPPPRPATA). Ser132 serves as a coordination point for substrate. Catalysis depends on Tyr145, which acts as the Proton acceptor.

Belongs to the short-chain dehydrogenases/reductases (SDR) family.

In terms of biological role, might catalyze the conversion of monoamine compounds or their metabolites. The sequence is that of Protein MoaE (moaE) from Klebsiella aerogenes (Enterobacter aerogenes).